A 344-amino-acid chain; its full sequence is Ferrochelatase (344 aa).

Fe cation contacts are provided by histidine 214 and glutamate 295.

The protein belongs to the ferrochelatase family.

It is found in the cytoplasm. It carries out the reaction heme b + 2 H(+) = protoporphyrin IX + Fe(2+). It participates in porphyrin-containing compound metabolism; protoheme biosynthesis; protoheme from protoporphyrin-IX: step 1/1. Functionally, catalyzes the ferrous insertion into protoporphyrin IX. In Agrobacterium fabrum (strain C58 / ATCC 33970) (Agrobacterium tumefaciens (strain C58)), this protein is Ferrochelatase.